The sequence spans 215 residues: Peroxiredoxin-5, mitochondrial (215 aa).

The N-terminal 53 residues, 1–53 (MGLAGVCVLRRSAGYILGGAARQSVAATAAARRRSEGGWASGGVRSFSRAAAA), are a transit peptide targeting the mitochondrion. Residues 57–215 (IKVGDAIPAV…SLAPSIISQL (159 aa)) enclose the Thioredoxin domain. K76 bears the N6-acetyllysine mark. At K84 the chain carries N6-acetyllysine; alternate. N6-succinyllysine; alternate is present on K84. C101 functions as the Cysteine sulfenic acid (-SOH) intermediate in the catalytic mechanism. C101 carries S-palmitoyl cysteine lipidation. C101 and C205 are disulfide-bonded. An N6-succinyllysine modification is found at K117. 2 positions are modified to phosphoserine: S172 and S183. The short motif at 213–215 (SQL) is the Microbody targeting signal element.

The protein belongs to the peroxiredoxin family. Prx5 subfamily. Monomer. S-palmitoylated. Palmitoylation occurs on the active site, inhibiting its reactivity; therefore PRDX5 palmitoylation status determines its antioxidant capacity. Post-translationally, S-palmitoylated. Depalmitoylated by ABHD10.

It localises to the mitochondrion. Its subcellular location is the cytoplasm. The protein resides in the peroxisome matrix. The enzyme catalyses a hydroperoxide + [thioredoxin]-dithiol = an alcohol + [thioredoxin]-disulfide + H2O. In terms of biological role, thiol-specific peroxidase that catalyzes the reduction of hydrogen peroxide and organic hydroperoxides to water and alcohols, respectively. Plays a role in cell protection against oxidative stress by detoxifying peroxides and as sensor of hydrogen peroxide-mediated signaling events. In Chlorocebus aethiops (Green monkey), this protein is Peroxiredoxin-5, mitochondrial (PRDX5).